Here is a 148-residue protein sequence, read N- to C-terminus: Ribonuclease pancreatic (148 aa).

The signal sequence occupies residues 1–25 (MGLEKSLILLPLLVLVFGWVQSSLG). 2 residues coordinate substrate: K32 and R35. The active-site Proton acceptor is the H36. 4 disulfides stabilise this stretch: C50-C108, C64-C119, C82-C134, and C89-C96. N-linked (GlcNAc...) asparagine glycosylation is present at N58. A substrate-binding site is contributed by 65-69 (KPVNT). Residue N86 is glycosylated (N-linked (GlcNAc...) asparagine). The substrate site is built by K90 and R109. Residue H143 is the Proton donor of the active site.

The protein belongs to the pancreatic ribonuclease family. Monomer. Interacts with and forms tight 1:1 complexes with RNH1. Dimerization of two such complexes may occur. Interaction with RNH1 inhibits this protein. In terms of tissue distribution, pancreas.

It is found in the secreted. The catalysed reaction is an [RNA] containing cytidine + H2O = an [RNA]-3'-cytidine-3'-phosphate + a 5'-hydroxy-ribonucleotide-3'-[RNA].. The enzyme catalyses an [RNA] containing uridine + H2O = an [RNA]-3'-uridine-3'-phosphate + a 5'-hydroxy-ribonucleotide-3'-[RNA].. Endonuclease that catalyzes the cleavage of RNA on the 3' side of pyrimidine nucleotides. Acts on single-stranded and double-stranded RNA. The sequence is that of Ribonuclease pancreatic (RNASE1) from Chionomys nivalis (European snow vole).